Here is a 466-residue protein sequence, read N- to C-terminus: Asparagine--tRNA ligase (466 aa).

This sequence belongs to the class-II aminoacyl-tRNA synthetase family. As to quaternary structure, homodimer.

Its subcellular location is the cytoplasm. The enzyme catalyses tRNA(Asn) + L-asparagine + ATP = L-asparaginyl-tRNA(Asn) + AMP + diphosphate + H(+). This is Asparagine--tRNA ligase from Vibrio cholerae serotype O1 (strain ATCC 39315 / El Tor Inaba N16961).